A 254-amino-acid polypeptide reads, in one-letter code: 14-3-3-like protein RA215 (254 aa).

Belongs to the 14-3-3 family.

The chain is 14-3-3-like protein RA215 from Solanum tuberosum (Potato).